Reading from the N-terminus, the 645-residue chain is Octopamine receptor Oamb (645 aa).

Residues 1–25 (MNETECEDLIKSVKWTEPANLISLA) are Extracellular-facing. A glycan (N-linked (GlcNAc...) asparagine) is linked at Asn-2. A helical membrane pass occupies residues 26-46 (VLEFINVLVIGGNCLVIAAVF). At 47 to 56 (CSNKLRSVTN) the chain is on the cytoplasmic side. The chain crosses the membrane as a helical span at residues 57 to 77 (FFIVNLAVADLLVGLAVLPFS). Residues 78 to 94 (ATWEVFKVWIFGDLWCR) lie on the Extracellular side of the membrane. The cysteines at positions 93 and 287 are disulfide-linked. Residues 95–115 (IWLAVDVWMCTASILNLCAIS) form a helical membrane-spanning segment. Over 116–138 (LDRYVAVTRPVTYPSIMSTKKAK) the chain is Cytoplasmic. A helical transmembrane segment spans residues 139–159 (SLIAGIWVLSFFICFPPLVGW). Residues 160-295 (KDQKAVIQPT…KCELTNDRGY (136 aa)) are Extracellular-facing. N-linked (GlcNAc...) asparagine glycosylation occurs at Asn-174. The disordered stretch occupies residues 190 to 212 (QLGLDSIKDQGEASLPPSPPHIG). A helical transmembrane segment spans residues 296–316 (VLYSALGSFYIPMFVMLFFYW). Topologically, residues 317 to 520 (RIYRAAVRTT…FRMETKAAKT (204 aa)) are cytoplasmic. Disordered regions lie at residues 358–386 (GRGS…PSPE) and 479–500 (RQSN…KKMG). The segment covering 369-385 (SNGSTQSTTTTLGTPSP) has biased composition (low complexity). A helical membrane pass occupies residues 521-541 (LAIIVGMFIFCWCPFFTMYII). The Extracellular segment spans residues 542-551 (RPFCQDCVDP). Residues 552–572 (LLFSVLFWLGYCNSAVNPMIY) traverse the membrane as a helical segment. Topologically, residues 573 to 645 (ALFSKDFRFA…HHSEMSNDPR (73 aa)) are cytoplasmic. The disordered stretch occupies residues 621–645 (TPSAAAHSFGDESELHHSEMSNDPR). Over residues 629–645 (FGDESELHHSEMSNDPR) the composition is skewed to basic and acidic residues.

This sequence belongs to the G-protein coupled receptor 1 family. Highly enriched in mushroom body neuropil and in the ellipsoid body (at protein level). Expressed in oviduct epithelium (at protein level). Expressed in the adult and larval brain, thoracic and abdominal ganglia, terminal cells of the larval tracheal system, muscle, mature eggs and reproductive system.

The protein resides in the cell membrane. In terms of biological role, receptor for octopamine (OA) which is a neurotransmitter, neurohormone and neuromodulator in invertebrates. Stimulates intracellular accumulation of cAMP and Ca(2+) following ligand binding. Required for ovulation. Following activation on mature follicle cells by OA, induces activity of the metalloprotease Mmp2 which leads to breakdown of the posterior follicle wall, resulting in ovulation. Ligand binding probably also leads to activation of CamKII which is also required for ovulation. Modulates sleep/wake behavior by acting in neurons of the pars intercerebralis to promote wakefulness. Plays a role in courtship conditioning where the courtship behavior of males rejected by already mated females is inhibited with further females. Required in the mushroom body for appetitive olfactory learning. Specifically conveys the short-term reinforcing effects of sweet taste. In insulin-producing cells of the brain, plays a role in inhibiting transcription of insulin-like peptide Ilp3. Also plays a role in social behavior by modulating male agression. The chain is Octopamine receptor Oamb from Drosophila melanogaster (Fruit fly).